We begin with the raw amino-acid sequence, 226 residues long: UPF0173 metal-dependent hydrolase SRU_1937 (226 aa).

This sequence belongs to the UPF0173 family.

The chain is UPF0173 metal-dependent hydrolase SRU_1937 from Salinibacter ruber (strain DSM 13855 / M31).